The chain runs to 858 residues: Zinc finger protein ZXDC (858 aa).

Disordered regions lie at residues 1-73 (MDLP…GGDS), 85-108 (DTHGQEEAEPDSGASPTEQVPAAA), and 142-175 (AAPSLHPATTPGLEPSSAAASRRGPVAASAGSPA). The segment covering 59 to 68 (APGPSPPPPE) has biased composition (pro residues). A compositionally biased stretch (low complexity) spans 142 to 152 (AAPSLHPATTP). 10 consecutive C2H2-type zinc fingers follow at residues 176–200 (YRCPEPQCALSFAKKHQLKVHLLTH), 209–233 (FKCPLDGCGWAFTTSYKLKRHLQSH), 239–263 (FSCPVGGCGKKFTTVYNLKAHMKGH), 269–291 (FKCEVCAERFPTHAKLNSHQRSH), 298–322 (YKCDFPGCEKTFITVSALFSHNRAH), 329–353 (FSCSFPGCNKQYDKACRLKIHLRSH), 359–383 (FICDSDSCGWTFTSMSKLLRHKRKH), 389–413 (FTCPVEGCGKSFTRAEHLKGHSITH), 419–443 (FECPVEGCCARFSARSSLYIHSKKH), and 452–477 (SRCPVSSCNRLFTSKHSMKAHVVRQH). The span at 624–634 (DSPALTPSNNL) shows a compositional bias: polar residues. Positions 624–652 (DSPALTPSNNLTAPGTTPTSSDTTQETGS) are disordered. Residues 635–651 (TAPGTTPTSSDTTQETG) are compositionally biased toward low complexity. Lysine 661 is covalently cross-linked (Glycyl lysine isopeptide (Lys-Gly) (interchain with G-Cter in SUMO)). Disordered stretches follow at residues 671–714 (DVVQ…LESG) and 727–751 (VKKKKQKGTGSDEGASDSAHRKVKG). Polar residues predominate over residues 681 to 692 (GPSQSVLSSSTE).

The protein belongs to the ZXD family. As to quaternary structure, self-associates. Interacts with ZXDB and CIITA. Post-translationally, sumoylated at Lys-661 with SUMO1, SUMO2 and SUMO3; sumoylation enhances the activity of the transcriptional activation domain.

Its subcellular location is the nucleus. Functionally, cooperates with CIITA to promote transcription of MHC class I and MHC class II genes. In Mus musculus (Mouse), this protein is Zinc finger protein ZXDC (Zxdc).